Consider the following 559-residue polypeptide: MANVDSDSRHLISEVEHEVNPGPMNIQFDSSDLRSKRPFYIEPTNIVNVNDVIQKVSDHAAAMNKRIHYYSRLTTPADKALIAPDHVVPAPEECYVYSPLGSAYKLKSYTEGYRKNTSLVTIFMIWNTMMGTSILSIPWGIKQAGFTTGMCVIVLMGLLTLYCCYRVVKSRSMIVTSDTTTWEYPDVCKHYFGSFGQWSSLLFSLVSLIGAMIVYWVLMSNFLFNTGKFIFNFIHHINDTDTVLSTNNSSPVICPSAGSGHPDNSSMIFYNSDTEVRLFERWWDKSKTVPFYLIGLLLPLLNFKSPSFFSKFNILGTVSVLYLIFIVTLKAIRLGFHLEFHWFAPTEFFVPEIRAQFPQLTGVLTLAFFIHNCIITLLKNNKNQENNVRDLCIAYMLVTLTYLYIGVLVFASFPSPPLPKDCIEQNFLDNFPSSDTLSFIARICLLFQMMTVYPLLGYLARVQLLGHIFGDIYPSIFHVLILNLIIVGAGVTMACFYPNIGGIIRYSGAACGLAFVFIYPSLIYILSQHQEERLTWPKLVFHIIIIILGLANLIAQFFM.

Topologically, residues 1–118 (MANVDSDSRH…YTEGYRKNTS (118 aa)) are cytoplasmic. Residues 119–139 (LVTIFMIWNTMMGTSILSIPW) form a helical membrane-spanning segment. The important for arginine binding and amino acid transport stretch occupies residues 128–133 (TMMGTS). Ser133 lines the arginine pocket. The Lumenal portion of the chain corresponds to 140-145 (GIKQAG). Residues 146-166 (FTTGMCVIVLMGLLTLYCCYR) traverse the membrane as a helical segment. The Cytoplasmic portion of the chain corresponds to 167–197 (VVKSRSMIVTSDTTTWEYPDVCKHYFGSFGQ). The chain crosses the membrane as a helical span at residues 198–224 (WSSLLFSLVSLIGAMIVYWVLMSNFLF). Topologically, residues 225 to 281 (NTGKFIFNFIHHINDTDTVLSTNNSSPVICPSAGSGHPDNSSMIFYNSDTEVRLFER) are lumenal. 3 N-linked (GlcNAc...) asparagine glycosylation sites follow: Asn238, Asn247, and Asn264. A disulfide bridge connects residues Cys254 and Cys422. The helical transmembrane segment at 282-298 (WWDKSKTVPFYLIGLLL) threads the bilayer. The Cytoplasmic segment spans residues 299–307 (PLLNFKSPS). A helical membrane pass occupies residues 308–332 (FFSKFNILGTVSVLYLIFIVTLKAI). Residues 333–354 (RLGFHLEFHWFAPTEFFVPEIR) are Lumenal-facing. A helical membrane pass occupies residues 355–375 (AQFPQLTGVLTLAFFIHNCII). The Cytoplasmic segment spans residues 376–392 (TLLKNNKNQENNVRDLC). The helical transmembrane segment at 393 to 413 (IAYMLVTLTYLYIGVLVFASF) threads the bilayer. Residues 414 to 435 (PSPPLPKDCIEQNFLDNFPSSD) are Lumenal-facing. The helical transmembrane segment at 436–456 (TLSFIARICLLFQMMTVYPLL) threads the bilayer. Residues 442-452 (RICLLFQMMTV) carry the CARC motif motif. Residues 455–461 (LLGYLAR) carry the CRAC motif motif. Topologically, residues 457-477 (GYLARVQLLGHIFGDIYPSIF) are cytoplasmic. A helical membrane pass occupies residues 478–498 (HVLILNLIIVGAGVTMACFYP). Residues 499 to 505 (NIGGIIR) lie on the Lumenal side of the membrane. Residues 506–526 (YSGAACGLAFVFIYPSLIYIL) form a helical membrane-spanning segment. Over 527–538 (SQHQEERLTWPK) the chain is Cytoplasmic. Residues 539 to 559 (LVFHIIIIILGLANLIAQFFM) form a helical membrane-spanning segment.

Belongs to the amino acid/polyamine transporter 2 family. SLC38A9 subfamily. In terms of assembly, associated component of the Ragulator complex (composed of LAMTOR1, LAMTOR2, LAMTOR3, LAMTOR4 and LAMTOR5). Associated component of the Rag GTPases heterodimers (composed of RRAGA, RRAGB, RRAGC and RRAGD); this interaction is independent of the Ragulator complex but depends on the nucleotide loading state of the Rag GTPase heterodimer. Interacts with TM4SF5. Interacts with NPC1; this interaction inhibits cholesterol-mediated mTORC1 activation via its sterol transport activity. Post-translationally, glycosylated.

Its subcellular location is the lysosome membrane. The protein localises to the late endosome membrane. The enzyme catalyses L-leucine(in) = L-leucine(out). It catalyses the reaction L-tyrosine(in) = L-tyrosine(out). It carries out the reaction L-glutamine(out) = L-glutamine(in). The catalysed reaction is L-asparagine(out) = L-asparagine(in). In terms of biological role, lysosomal amino acid transporter involved in the activation of mTORC1 in response to amino acid levels. Probably acts as an amino acid sensor of the Rag GTPases and Ragulator complexes, 2 complexes involved in amino acid sensing and activation of mTORC1, a signaling complex promoting cell growth in response to growth factors, energy levels, and amino acids. Following activation by amino acids, the Ragulator and Rag GTPases function as a scaffold recruiting mTORC1 to lysosomes where it is in turn activated. SLC38A9 mediates transport of amino acids with low capacity and specificity with a slight preference for polar amino acids. Acts as an arginine sensor. Following activation by arginine binding, mediates transport of L-glutamine, leucine and tyrosine with high efficiency, and is required for the efficient utilization of these amino acids after lysosomal protein degradation. However, the transport mechanism is not well defined and the role of sodium is not clear. Can disassemble the lysosomal folliculin complex (LFC), and thereby triggers GAP activity of FLCN:FNIP2 toward RRAGC. Acts as an cholesterol sensor that conveys increases in lysosomal cholesterol, leading to lysosomal recruitment and activation of mTORC1 via the Rag GTPases. Guanine exchange factor (GEF) that, upon arginine binding, stimulates GDP release from RRAGA and therefore activates the Rag GTPase heterodimer and the mTORC1 pathway in response to nutrient sufficiency. This is Neutral amino acid transporter 9 from Rattus norvegicus (Rat).